Consider the following 155-residue polypeptide: Microsomal glutathione S-transferase 1 (155 aa).

Topologically, residues 3-9 are lumenal; the sequence is DLTQVMD. Residues 10–33 traverse the membrane as a helical segment; the sequence is DEVFMAFASYATIILSKMMLMSTA. The Cytoplasmic segment spans residues 34 to 62; it reads TAFYRLTRKVFANPEDCVAFGKGENAKKY. Residue Arg38 participates in glutathione binding. An N6-acetyllysine mark is found at Lys42, Lys55, and Lys60. Residues 63 to 96 traverse the membrane as a helical segment; it reads LRTDDRVERVRRAHLNDLENIIPFLGIGLLYSLS. Glutathione-binding residues include Arg73, Arg74, His76, and Glu81. Residues 97–99 lie on the Lumenal side of the membrane; it reads GPD. The helical transmembrane segment at 100–123 threads the bilayer; sequence PSTAILHFRLFVGARIYHTIAYLT. Tyr121 lines the glutathione pocket. At 124-128 the chain is on the cytoplasmic side; sequence PLPQP. Residues 129 to 148 traverse the membrane as a helical segment; that stretch reads NRALSFFVGYGVTLSMAYRL. Over 149 to 155 the chain is Lumenal; that stretch reads LKSKLYL.

This sequence belongs to the MAPEG family. Homotrimer; The trimer binds only one molecule of glutathione. Highly expressed in liver.

Its subcellular location is the endoplasmic reticulum membrane. It localises to the mitochondrion outer membrane. The enzyme catalyses RX + glutathione = an S-substituted glutathione + a halide anion + H(+). In terms of biological role, conjugation of reduced glutathione to a wide number of exogenous and endogenous hydrophobic electrophiles. This is Microsomal glutathione S-transferase 1 (MGST1) from Homo sapiens (Human).